A 332-amino-acid chain; its full sequence is Ketol-acid reductoisomerase (NADP(+)) (332 aa).

Residues 1–182 (MATIYRDKDA…GGTRAGVLET (182 aa)) enclose the KARI N-terminal Rossmann domain. NADP(+)-binding positions include 25 to 28 (YGNQ), Lys-49, Ser-51, and 83 to 86 (DELQ). His-108 is a catalytic residue. Gly-134 contributes to the NADP(+) binding site. One can recognise a KARI C-terminal knotted domain in the interval 183-328 (TFAEETETDL…AELRAMMPWL (146 aa)). Mg(2+) contacts are provided by Asp-191, Glu-195, Glu-227, and Glu-231. Position 252 (Ser-252) interacts with substrate.

It belongs to the ketol-acid reductoisomerase family. It depends on Mg(2+) as a cofactor.

It catalyses the reaction (2R)-2,3-dihydroxy-3-methylbutanoate + NADP(+) = (2S)-2-acetolactate + NADPH + H(+). The enzyme catalyses (2R,3R)-2,3-dihydroxy-3-methylpentanoate + NADP(+) = (S)-2-ethyl-2-hydroxy-3-oxobutanoate + NADPH + H(+). It functions in the pathway amino-acid biosynthesis; L-isoleucine biosynthesis; L-isoleucine from 2-oxobutanoate: step 2/4. Its pathway is amino-acid biosynthesis; L-valine biosynthesis; L-valine from pyruvate: step 2/4. Involved in the biosynthesis of branched-chain amino acids (BCAA). Catalyzes an alkyl-migration followed by a ketol-acid reduction of (S)-2-acetolactate (S2AL) to yield (R)-2,3-dihydroxy-isovalerate. In the isomerase reaction, S2AL is rearranged via a Mg-dependent methyl migration to produce 3-hydroxy-3-methyl-2-ketobutyrate (HMKB). In the reductase reaction, this 2-ketoacid undergoes a metal-dependent reduction by NADPH to yield (R)-2,3-dihydroxy-isovalerate. The protein is Ketol-acid reductoisomerase (NADP(+)) of Methanothrix thermoacetophila (strain DSM 6194 / JCM 14653 / NBRC 101360 / PT) (Methanosaeta thermophila).